Consider the following 193-residue polypeptide: Interleukin-18-binding protein (193 aa).

The first 28 residues, 1 to 28 (MTMRHCWTAGPSSWWVLLLYVHVILARA), serve as a signal peptide directing secretion. Positions 60–161 (PALDVIWPEK…QVAQYHIILA (102 aa)) constitute an Ig-like C2-type domain. 4 N-linked (GlcNAc...) asparagine glycosylation sites follow: asparagine 74, asparagine 98, asparagine 120, and asparagine 142. A disulfide bond links cysteine 81 and cysteine 145. The span at 172-185 (SPSQETLSSHSPVS) shows a compositional bias: polar residues. Residues 172 to 193 (SPSQETLSSHSPVSRSAGPGVA) are disordered.

Its subcellular location is the secreted. Functionally, binds to IL-18 and inhibits its activity. Functions as an inhibitor of the early TH1 cytokine response. In Mus musculus (Mouse), this protein is Interleukin-18-binding protein (Il18bp).